The sequence spans 136 residues: Monothiol glutaredoxin-S3 (136 aa).

The Glutaredoxin domain maps to 18–135 (EREVRRAVEE…PVLKQAGALW (118 aa)). Cysteine 38 lines the [2Fe-2S] cluster pocket. The Responsive for interaction with TGA factors signature appears at 133–136 (ALWL).

It belongs to the glutaredoxin family. CC-type subfamily.

The protein localises to the cytoplasm. Its subcellular location is the nucleus. Functionally, may only reduce GSH-thiol disulfides, but not protein disulfides. This Oryza sativa subsp. japonica (Rice) protein is Monothiol glutaredoxin-S3 (GRXS3).